Reading from the N-terminus, the 178-residue chain is Sec-independent protein translocase protein TatB (178 aa).

A helical membrane pass occupies residues methionine 1 to glycine 21. The interval leucine 146–serine 178 is disordered. The segment covering glutamate 168–serine 178 has biased composition (basic and acidic residues).

This sequence belongs to the TatB family. As to quaternary structure, the Tat system comprises two distinct complexes: a TatABC complex, containing multiple copies of TatA, TatB and TatC subunits, and a separate TatA complex, containing only TatA subunits. Substrates initially bind to the TatABC complex, which probably triggers association of the separate TatA complex to form the active translocon.

Its subcellular location is the cell inner membrane. Part of the twin-arginine translocation (Tat) system that transports large folded proteins containing a characteristic twin-arginine motif in their signal peptide across membranes. Together with TatC, TatB is part of a receptor directly interacting with Tat signal peptides. TatB may form an oligomeric binding site that transiently accommodates folded Tat precursor proteins before their translocation. This Bradyrhizobium sp. (strain ORS 278) protein is Sec-independent protein translocase protein TatB.